The primary structure comprises 522 residues: Biotin-dependent long chain acyl-coenzyme A carboxylase beta4 subunit (522 aa).

The 251-residue stretch at 11 to 261 (TAEKLAELRE…NCFDKPPVVN (251 aa)) folds into the CoA carboxyltransferase N-terminal domain. One can recognise a CoA carboxyltransferase C-terminal domain in the interval 270–503 (GHDLELDSIV…RLLLRKSMHL (234 aa)).

This sequence belongs to the AccD/PCCB family. The biotin-dependent long-chain acyl-CoA carboxylase (LCC) complex is composed of AccA3, which contains the biotin carboxylase (BC) and biotin carboxyl carrier protein (BCCP) domains, and AccD4, which contains the carboxyl transferase (CT) domain. The complex also contains the beta5 subunit AccD5 and the epsilon subunit AccE5. The four subunits are essential for activity, but AccD5, together with AccE5, probably plays a structural role rather than a catalytic one.

Component of a biotin-dependent acyl-CoA carboxylase complex. This subunit transfers the CO2 from carboxybiotin to the CoA ester substrate. When associated with the alpha3 subunit AccA3, the beta5 subunit AccD5 and the epsilon subunit AccE5, forms the LCC complex, which is involved in the carboxylation of long chain acyl-CoA. The LCC complex can use C16-C24 substrates, the highest specific activity is obtained with carboxy-C20-CoA. Has low activity with acetyl-CoA and propionyl-CoA. The sequence is that of Biotin-dependent long chain acyl-coenzyme A carboxylase beta4 subunit from Mycobacterium tuberculosis (strain ATCC 25618 / H37Rv).